A 507-amino-acid polypeptide reads, in one-letter code: Glucose-6-phosphate isomerase (507 aa).

Residue Glu-338 is the Proton donor of the active site. Catalysis depends on residues His-369 and Lys-479.

The protein belongs to the GPI family.

The protein localises to the cytoplasm. It catalyses the reaction alpha-D-glucose 6-phosphate = beta-D-fructose 6-phosphate. Its pathway is carbohydrate biosynthesis; gluconeogenesis. It functions in the pathway carbohydrate degradation; glycolysis; D-glyceraldehyde 3-phosphate and glycerone phosphate from D-glucose: step 2/4. In terms of biological role, provides a gateway for fructose into the Entner-Doudouroff pathway. Its function is as follows. Catalyzes the reversible isomerization of glucose-6-phosphate to fructose-6-phosphate. The sequence is that of Glucose-6-phosphate isomerase from Zymomonas mobilis subsp. mobilis (strain ATCC 31821 / ZM4 / CP4).